A 324-amino-acid chain; its full sequence is Glyoxylate/hydroxypyruvate reductase B (324 aa).

Catalysis depends on residues arginine 237 and glutamate 266. Histidine 285 serves as the catalytic Proton donor.

The protein belongs to the D-isomer specific 2-hydroxyacid dehydrogenase family. GhrB subfamily. Homodimer.

Its subcellular location is the cytoplasm. The enzyme catalyses glycolate + NADP(+) = glyoxylate + NADPH + H(+). It carries out the reaction (R)-glycerate + NAD(+) = 3-hydroxypyruvate + NADH + H(+). It catalyses the reaction (R)-glycerate + NADP(+) = 3-hydroxypyruvate + NADPH + H(+). Functionally, catalyzes the NADPH-dependent reduction of glyoxylate and hydroxypyruvate into glycolate and glycerate, respectively. In Cronobacter sakazakii (strain ATCC BAA-894) (Enterobacter sakazakii), this protein is Glyoxylate/hydroxypyruvate reductase B.